A 359-amino-acid chain; its full sequence is Phosphoserine aminotransferase (359 aa).

Residues Ser-9 and Arg-42 each contribute to the L-glutamate site. Residues Ala-76–Ser-77, Trp-102, Thr-152, Asp-171, and Gln-194 contribute to the pyridoxal 5'-phosphate site. Lys-195 carries the N6-(pyridoxal phosphate)lysine modification. Asn-236 to Thr-237 is a pyridoxal 5'-phosphate binding site.

This sequence belongs to the class-V pyridoxal-phosphate-dependent aminotransferase family. SerC subfamily. As to quaternary structure, homodimer. Pyridoxal 5'-phosphate serves as cofactor.

The protein localises to the cytoplasm. It carries out the reaction O-phospho-L-serine + 2-oxoglutarate = 3-phosphooxypyruvate + L-glutamate. The enzyme catalyses 4-(phosphooxy)-L-threonine + 2-oxoglutarate = (R)-3-hydroxy-2-oxo-4-phosphooxybutanoate + L-glutamate. It participates in amino-acid biosynthesis; L-serine biosynthesis; L-serine from 3-phospho-D-glycerate: step 2/3. Its pathway is cofactor biosynthesis; pyridoxine 5'-phosphate biosynthesis; pyridoxine 5'-phosphate from D-erythrose 4-phosphate: step 3/5. Catalyzes the reversible conversion of 3-phosphohydroxypyruvate to phosphoserine and of 3-hydroxy-2-oxo-4-phosphonooxybutanoate to phosphohydroxythreonine. The polypeptide is Phosphoserine aminotransferase (Marinomonas sp. (strain MWYL1)).